The primary structure comprises 196 residues: Metalloproteinase inhibitor 2 (196 aa).

A signal peptide spans 1–2 (RA). Position 3 (C3) interacts with Zn(2+). Involved in metalloproteinase-binding stretches follow at residues 3–6 (CSCS) and 71–72 (SA). Intrachain disulfides connect C3/C74, C5/C103, C15/C128, C130/C177, C135/C140, and C148/C169. Residues 3-128 (CSCSPVHPQQ…SLNHRYQMGC (126 aa)) form the NTR domain.

This sequence belongs to the protease inhibitor I35 (TIMP) family. As to quaternary structure, interacts (via the C-terminal) with MMP2 (via the C-terminal PEX domain); the interaction inhibits the MMP2 activity. The activity of TIMP2 is dependent on the presence of disulfide bonds.

Its subcellular location is the secreted. Functionally, complexes with metalloproteinases (such as collagenases) and irreversibly inactivates them by binding to their catalytic zinc cofactor. The chain is Metalloproteinase inhibitor 2 (TIMP2) from Cricetulus longicaudatus (Long-tailed dwarf hamster).